Here is a 61-residue protein sequence, read N- to C-terminus: Small ribosomal subunit protein uS14 (61 aa).

Zn(2+) contacts are provided by Cys24, Cys27, Cys40, and Cys43.

The protein belongs to the universal ribosomal protein uS14 family. Zinc-binding uS14 subfamily. In terms of assembly, part of the 30S ribosomal subunit. Contacts proteins S3 and S10. Requires Zn(2+) as cofactor.

In terms of biological role, binds 16S rRNA, required for the assembly of 30S particles and may also be responsible for determining the conformation of the 16S rRNA at the A site. The protein is Small ribosomal subunit protein uS14 of Bifidobacterium adolescentis (strain ATCC 15703 / DSM 20083 / NCTC 11814 / E194a).